The following is a 74-amino-acid chain: Conotoxin Im6.10 (74 aa).

The N-terminal stretch at 1–19 is a signal peptide; the sequence is MKTGMIICLLLIAFMDADG. Positions 20–47 are excised as a propeptide; it reads SPGDTLYSQKTADTDSGMKRFQKTFQKR. Intrachain disulfides connect Cys49–Cys58, Cys52–Cys63, and Cys57–Cys73.

In terms of tissue distribution, expressed by the venom duct.

Its subcellular location is the secreted. Probable neurotoxin. The protein is Conotoxin Im6.10 of Conus imperialis (Imperial cone).